A 380-amino-acid chain; its full sequence is Cytochrome b (380 aa).

The next 4 membrane-spanning stretches (helical) occupy residues 34-54 (FGSLLAVCLATQIITGLLLAM), 78-99 (WLIRNLHANGASFFFICIFLHI), 114-134 (WNTGVVLLLTLMATAFVGYVL), and 179-199 (FFALHFLLPFVIAGITIIHLT). Residues His-84 and His-98 each coordinate heme b. 2 residues coordinate heme b: His-183 and His-197. Residue His-202 coordinates a ubiquinone. 4 consecutive transmembrane segments (helical) span residues 227–247 (LKDILGLTLMFIPFLTLALFS), 289–309 (LGGVLALAASVLILLLIPFLH), 321–341 (LSQILFWLLVANLLILTWIGS), and 348–368 (FIIIGQMASFSYFSILLILFP).

It belongs to the cytochrome b family. The cytochrome bc1 complex contains 11 subunits: 3 respiratory subunits (MT-CYB, CYC1 and UQCRFS1), 2 core proteins (UQCRC1 and UQCRC2) and 6 low-molecular weight proteins (UQCRH/QCR6, UQCRB/QCR7, UQCRQ/QCR8, UQCR10/QCR9, UQCR11/QCR10 and a cleavage product of UQCRFS1). This cytochrome bc1 complex then forms a dimer. The cofactor is heme b.

Its subcellular location is the mitochondrion inner membrane. Functionally, component of the ubiquinol-cytochrome c reductase complex (complex III or cytochrome b-c1 complex) that is part of the mitochondrial respiratory chain. The b-c1 complex mediates electron transfer from ubiquinol to cytochrome c. Contributes to the generation of a proton gradient across the mitochondrial membrane that is then used for ATP synthesis. In Pavo muticus (Green peafowl), this protein is Cytochrome b (MT-CYB).